The sequence spans 364 residues: tRNA-specific 2-thiouridylase MnmA (364 aa).

Residues 13-20 and Met39 contribute to the ATP site; that span reads GMSGGVDS. The segment at 99–101 is interaction with target base in tRNA; sequence NPD. Cys104 serves as the catalytic Nucleophile. Cys104 and Cys200 are joined by a disulfide. Residue Gly128 coordinates ATP. Positions 150-152 are interaction with tRNA; sequence KDQ. Cys200 (cysteine persulfide intermediate) is an active-site residue. The interval 310-311 is interaction with tRNA; it reads RY.

This sequence belongs to the MnmA/TRMU family.

It is found in the cytoplasm. It catalyses the reaction S-sulfanyl-L-cysteinyl-[protein] + uridine(34) in tRNA + AH2 + ATP = 2-thiouridine(34) in tRNA + L-cysteinyl-[protein] + A + AMP + diphosphate + H(+). In terms of biological role, catalyzes the 2-thiolation of uridine at the wobble position (U34) of tRNA, leading to the formation of s(2)U34. This is tRNA-specific 2-thiouridylase MnmA from Alkaliphilus oremlandii (strain OhILAs) (Clostridium oremlandii (strain OhILAs)).